A 212-amino-acid chain; its full sequence is Golgi SNAP receptor complex member 2 (212 aa).

M1 carries the N-acetylmethionine modification. The Cytoplasmic segment spans residues 1-190 (MEPLYQQTHK…LIEKRAFQDK (190 aa)). Positions 61–107 (NRRQNAKLRVDQLKYDVQHLQTALRNFQHRRQAKEQQERQRDELLSR) form a coiled coil. An IxM motif; signal for cargo packaging into COPII-coated vesicles motif is present at residues 118–120 (IPM). The chain crosses the membrane as a helical; Anchor for type IV membrane protein span at residues 191–211 (YFMIGGMLLTCAVMFLVVQYL). A topological domain (vesicular) is located at residue T212.

This sequence belongs to the GOSR2 family. As to quaternary structure, part of a unique SNARE complex composed of the Golgi SNAREs GOSR1, STX5 and YKT6. Interacts with BET1.

Its subcellular location is the golgi apparatus. The protein localises to the cis-Golgi network membrane. It localises to the golgi apparatus membrane. It is found in the endoplasmic reticulum membrane. In terms of biological role, involved in transport of proteins from the cis/medial-Golgi to the trans-Golgi network. The protein is Golgi SNAP receptor complex member 2 (Gosr2) of Rattus norvegicus (Rat).